Consider the following 105-residue polypeptide: Large ribosomal subunit protein uL24 (105 aa).

This sequence belongs to the universal ribosomal protein uL24 family. Part of the 50S ribosomal subunit.

Functionally, one of two assembly initiator proteins, it binds directly to the 5'-end of the 23S rRNA, where it nucleates assembly of the 50S subunit. Its function is as follows. One of the proteins that surrounds the polypeptide exit tunnel on the outside of the subunit. The polypeptide is Large ribosomal subunit protein uL24 (Xanthobacter autotrophicus (strain ATCC BAA-1158 / Py2)).